The primary structure comprises 361 residues: Hydroxymethylglutaryl-CoA synthase (361 aa).

E92 serves as the catalytic Proton donor/acceptor. C124 functions as the Acyl-thioester intermediate in the catalytic mechanism. (3S)-3-hydroxy-3-methylglutaryl-CoA contacts are provided by C124, S165, T214, and H247. Catalysis depends on H247, which acts as the Proton donor/acceptor. K252 serves as a coordination point for CoA. K256, N279, and S309 together coordinate (3S)-3-hydroxy-3-methylglutaryl-CoA.

This sequence belongs to the thiolase-like superfamily. Archaeal HMG-CoA synthase family. Interacts with acetoacetyl-CoA thiolase that catalyzes the precedent step in the pathway and with a DUF35 protein. The acetoacetyl-CoA thiolase/HMG-CoA synthase complex channels the intermediate via a fused CoA-binding site, which allows for efficient coupling of the endergonic thiolase reaction with the exergonic HMGCS reaction.

The catalysed reaction is acetoacetyl-CoA + acetyl-CoA + H2O = (3S)-3-hydroxy-3-methylglutaryl-CoA + CoA + H(+). It functions in the pathway metabolic intermediate biosynthesis; (R)-mevalonate biosynthesis; (R)-mevalonate from acetyl-CoA: step 2/3. Functionally, catalyzes the condensation of acetyl-CoA with acetoacetyl-CoA to form 3-hydroxy-3-methylglutaryl-CoA (HMG-CoA). Functions in the mevalonate (MVA) pathway leading to isopentenyl diphosphate (IPP), a key precursor for the biosynthesis of isoprenoid compounds that are building blocks of archaeal membrane lipids. The chain is Hydroxymethylglutaryl-CoA synthase from Aeropyrum pernix (strain ATCC 700893 / DSM 11879 / JCM 9820 / NBRC 100138 / K1).